A 678-amino-acid polypeptide reads, in one-letter code: Translation factor GUF1 homolog, chloroplastic (678 aa).

The N-terminal 43 residues, 1 to 43, are a transit peptide targeting the chloroplast; it reads MASILLSLNTHTLLPLHTRTRTTKTTLKILRFSHKLPPSSPFY. The 182-residue stretch at 81 to 262 folds into the tr-type G domain; that stretch reads KNIRNFCIIA…AIVERVPPPR (182 aa). Residues 90–97, 155–159, and 209–212 contribute to the GTP site; these read AHIDHGKS, DTPGH, and NKID.

The protein belongs to the TRAFAC class translation factor GTPase superfamily. Classic translation factor GTPase family. LepA subfamily.

Its subcellular location is the plastid. It is found in the chloroplast. It carries out the reaction GTP + H2O = GDP + phosphate + H(+). Functionally, promotes chloroplast protein synthesis. May act as a fidelity factor of the translation reaction, by catalyzing a one-codon backward translocation of tRNAs on improperly translocated ribosomes. The polypeptide is Translation factor GUF1 homolog, chloroplastic (Populus trichocarpa (Western balsam poplar)).